Reading from the N-terminus, the 212-residue chain is Inactive ribonuclease-like protein 10 (212 aa).

Residues 1 to 24 (MKVTLVHLLFMMLLLLLGLGVGLG) form the signal peptide. N-linked (GlcNAc...) asparagine glycans are attached at residues Asn-129 and Asn-204.

Belongs to the pancreatic ribonuclease family. Post-translationally, the N-terminus is blocked. Glycosylated. As to expression, male-specific expression in proximal caput of the epididymis.

Its subcellular location is the secreted. In terms of biological role, secreted proximal epididymal protein required for post-testicular sperm maturation and male fertility. May be involved in sperm adhesion to the egg zona pellucida. Does not have ribonuclease activity. This Rattus norvegicus (Rat) protein is Inactive ribonuclease-like protein 10 (Rnase10).